The chain runs to 214 residues: Cysteine-rich venom protein LEI1 (214 aa).

Positions 1 to 18 are cleaved as a signal peptide; sequence MIAFILLSLAAVLQQSFG. An SCP domain is found at 37–165; that stretch reads VNMHNSLRRS…YYSYFYVCQY (129 aa). 5 cysteine pairs are disulfide-bonded: C74/C152, C91/C166, C147/C163, C185/C192, and C188/C197. A ShKT domain is found at 201–214; the sequence is CTVENKFTNCNTLV.

Belongs to the CRISP family. Expressed by the venom gland.

Its subcellular location is the secreted. In terms of biological role, blocks contraction of smooth muscle elicited by high potassium-induced depolarization, but does not block caffeine-stimulated contraction. May target voltage-gated calcium channels on smooth muscle. This is Cysteine-rich venom protein LEI1 from Leioheterodon madagascariensis (Malagasy giant hognose snake).